The following is a 153-amino-acid chain: Nucleoside diphosphate kinase (153 aa).

Lysine 12, phenylalanine 60, arginine 88, threonine 94, arginine 105, and asparagine 115 together coordinate ATP. The active-site Pros-phosphohistidine intermediate is histidine 118.

It belongs to the NDK family. Mg(2+) serves as cofactor.

Its subcellular location is the cytoplasm. It carries out the reaction a 2'-deoxyribonucleoside 5'-diphosphate + ATP = a 2'-deoxyribonucleoside 5'-triphosphate + ADP. The enzyme catalyses a ribonucleoside 5'-diphosphate + ATP = a ribonucleoside 5'-triphosphate + ADP. Functionally, major role in the synthesis of nucleoside triphosphates other than ATP. The ATP gamma phosphate is transferred to the NDP beta phosphate via a ping-pong mechanism, using a phosphorylated active-site intermediate. This is Nucleoside diphosphate kinase from Natronomonas pharaonis (strain ATCC 35678 / DSM 2160 / CIP 103997 / JCM 8858 / NBRC 14720 / NCIMB 2260 / Gabara) (Halobacterium pharaonis).